The following is a 339-amino-acid chain: DNA-directed RNA polymerase subunit alpha (339 aa).

The alpha N-terminal domain (alpha-NTD) stretch occupies residues 1 to 233; that stretch reads MVREEVAGST…DLFLPFLHAE (233 aa). The interval 264 to 339 is alpha C-terminal domain (alpha-CTD); that stretch reads KKGIPLNCIF…IDLLKNKLSF (76 aa).

It belongs to the RNA polymerase alpha chain family. As to quaternary structure, in plastids the minimal PEP RNA polymerase catalytic core is composed of four subunits: alpha, beta, beta', and beta''. When a (nuclear-encoded) sigma factor is associated with the core the holoenzyme is formed, which can initiate transcription.

It is found in the plastid. It localises to the chloroplast. It catalyses the reaction RNA(n) + a ribonucleoside 5'-triphosphate = RNA(n+1) + diphosphate. In terms of biological role, DNA-dependent RNA polymerase catalyzes the transcription of DNA into RNA using the four ribonucleoside triphosphates as substrates. This Crithopsis delileana protein is DNA-directed RNA polymerase subunit alpha.